The sequence spans 331 residues: Ketol-acid reductoisomerase (NADP(+)) (331 aa).

In terms of domain architecture, KARI N-terminal Rossmann spans 2–182 (AQLFYDSDAD…GGTRAGILET (181 aa)). Residues 25 to 28 (YGSQ), Ser51, Ser53, and 83 to 86 (DEFQ) each bind NADP(+). Residue His108 is part of the active site. Gly134 is a binding site for NADP(+). One can recognise a KARI C-terminal knotted domain in the interval 183–328 (NFKEETETDL…KGLRSMFSWL (146 aa)). Mg(2+) contacts are provided by Asp191, Glu195, Glu227, and Glu231. Residue Ser252 participates in substrate binding.

The protein belongs to the ketol-acid reductoisomerase family. The cofactor is Mg(2+).

It catalyses the reaction (2R)-2,3-dihydroxy-3-methylbutanoate + NADP(+) = (2S)-2-acetolactate + NADPH + H(+). The catalysed reaction is (2R,3R)-2,3-dihydroxy-3-methylpentanoate + NADP(+) = (S)-2-ethyl-2-hydroxy-3-oxobutanoate + NADPH + H(+). Its pathway is amino-acid biosynthesis; L-isoleucine biosynthesis; L-isoleucine from 2-oxobutanoate: step 2/4. It participates in amino-acid biosynthesis; L-valine biosynthesis; L-valine from pyruvate: step 2/4. Involved in the biosynthesis of branched-chain amino acids (BCAA). Catalyzes an alkyl-migration followed by a ketol-acid reduction of (S)-2-acetolactate (S2AL) to yield (R)-2,3-dihydroxy-isovalerate. In the isomerase reaction, S2AL is rearranged via a Mg-dependent methyl migration to produce 3-hydroxy-3-methyl-2-ketobutyrate (HMKB). In the reductase reaction, this 2-ketoacid undergoes a metal-dependent reduction by NADPH to yield (R)-2,3-dihydroxy-isovalerate. This is Ketol-acid reductoisomerase (NADP(+)) from Synechococcus sp. (strain CC9605).